A 313-amino-acid chain; its full sequence is Sororin-like protein 1 (313 aa).

The short motif at 44–46 (FGF) is the FGF motif element. The segment at 105–287 (ADENQQSVPT…NDNLKELTPG (183 aa)) is disordered. Residues 107-118 (ENQQSVPTVSIA) are compositionally biased toward polar residues. A compositionally biased stretch (pro residues) spans 123–134 (PELPPSSSPLLP). The segment covering 135–154 (PNGSESSSPIPLSLLSTSSL) has biased composition (low complexity). Residues 155-170 (QQRKITPSNLSNTSKP) are compositionally biased toward polar residues. Positions 184–196 (HGHHLTRLRKKRR) are enriched in basic residues. A compositionally biased stretch (basic and acidic residues) spans 249 to 264 (EKKILKTYHSQDKDTA). The interval 288-310 (KKEYLKSIKKYFQDVDDYQLHVV) is C-terminal Sororin domain.

Belongs to the sororin family. As to quaternary structure, interacts with Pds5 and Psm3.

It is found in the nucleus. Functionally, regulator of sister chromatid cohesion in mitosis stabilizing cohesin complex association with chromatin. Antagonizes the action of wpl1 which stimulates cohesin dissociation from chromatin. Cohesion ensures that chromosome partitioning is accurate in dividing cells and may play an important role in DNA repair. In Schizosaccharomyces pombe (strain 972 / ATCC 24843) (Fission yeast), this protein is Sororin-like protein 1.